Reading from the N-terminus, the 369-residue chain is MASLHPPSFAYMRDGRNLSLAESVPAEIMHMVDPYWYQWPPLEPMWFGIIGFVIAILGTMSLAGNFIVMYIFTSSKGLRTPSNMFVVNLAFSDFMMMFTMFPPVVLNGFYGTWIMGPFLCELYGMFGSLFGCVSIWSMTLIAYDRYCVIVKGMARKPLTATAAVLRLMVVWTICGAWALMPLFGWNRYVPEGNMTACGTDYFAKDWWNRSYIIVYSLWVYLTPLLTIIFSYWHIMKAVAAHEKAMREQAKKMNVASLRNSEADKSKAIEIKLAKVALTTISLWFFAWTPYTIINYAGIFESMHLSPLSTICGSVFAKANAVCNPIVYGLSHPKYKQVLREKMPCLACGKDDLTSDSRTQATAEISESQA.

Over 1 to 46 the chain is Extracellular; it reads MASLHPPSFAYMRDGRNLSLAESVPAEIMHMVDPYWYQWPPLEPMW. A glycan (N-linked (GlcNAc...) asparagine) is linked at Asn-17. A helical transmembrane segment spans residues 47–71; sequence FGIIGFVIAILGTMSLAGNFIVMYI. Over 72-83 the chain is Cytoplasmic; sequence FTSSKGLRTPSN. A helical membrane pass occupies residues 84-109; the sequence is MFVVNLAFSDFMMMFTMFPPVVLNGF. The Extracellular portion of the chain corresponds to 110 to 123; it reads YGTWIMGPFLCELY. Cys-120 and Cys-197 are disulfide-bonded. Residues 124-143 form a helical membrane-spanning segment; sequence GMFGSLFGCVSIWSMTLIAY. Over 144–162 the chain is Cytoplasmic; the sequence is DRYCVIVKGMARKPLTATA. Residues 163 to 186 traverse the membrane as a helical segment; it reads AVLRLMVVWTICGAWALMPLFGWN. At 187-210 the chain is on the extracellular side; it reads RYVPEGNMTACGTDYFAKDWWNRS. Asn-193 and Asn-208 each carry an N-linked (GlcNAc...) asparagine glycan. Residues 211–238 form a helical membrane-spanning segment; that stretch reads YIIVYSLWVYLTPLLTIIFSYWHIMKAV. Residues 239 to 274 are Cytoplasmic-facing; sequence AAHEKAMREQAKKMNVASLRNSEADKSKAIEIKLAK. A helical membrane pass occupies residues 275–298; the sequence is VALTTISLWFFAWTPYTIINYAGI. At 299–305 the chain is on the extracellular side; it reads FESMHLS. The helical transmembrane segment at 306–330 threads the bilayer; that stretch reads PLSTICGSVFAKANAVCNPIVYGLS. An N6-(retinylidene)lysine modification is found at Lys-317. Residues 331 to 369 lie on the Cytoplasmic side of the membrane; the sequence is HPKYKQVLREKMPCLACGKDDLTSDSRTQATAEISESQA.

This sequence belongs to the G-protein coupled receptor 1 family. Opsin subfamily. In terms of processing, phosphorylated on some or all of the serine and threonine residues present in the C-terminal region. In terms of tissue distribution, each Drosophila eye is composed of 800 facets or ommatidia. Each ommatidium contains 8 photoreceptor cells (R1-R8), the R1 to R6 cells are outer cells, while R7 and R8 are inner cells. Rh6 is expressed in a subset of R8 cells, most likely expressed in the subset of R8 cells paired with Rh4-expressing R7 cells (R7y).

The protein resides in the membrane. In terms of biological role, visual pigments are the light-absorbing molecules that mediate vision. They consist of an apoprotein, opsin, covalently linked to cis-retinal. The protein is Opsin Rh6 (Rh6) of Drosophila melanogaster (Fruit fly).